A 1054-amino-acid polypeptide reads, in one-letter code: Probable sucrose-phosphate synthase 1 (1054 aa).

Residues 104-115 (RLERERGRREAV) show a composition bias toward basic and acidic residues. 3 disordered regions span residues 104–125 (RLER…LSEG), 674–693 (LRNE…SDSL), and 708–727 (DGDK…DDRA).

This sequence belongs to the glycosyltransferase 1 family. As to quaternary structure, homodimer or homotetramer.

The catalysed reaction is beta-D-fructose 6-phosphate + UDP-alpha-D-glucose = sucrose 6(F)-phosphate + UDP + H(+). Its pathway is glycan biosynthesis; sucrose biosynthesis; sucrose from D-fructose 6-phosphate and UDP-alpha-D-glucose: step 1/2. With respect to regulation, activity is regulated by phosphorylation and moderated by concentration of metabolites and light. In terms of biological role, plays a role in photosynthetic sucrose synthesis by catalyzing the rate-limiting step of sucrose biosynthesis from UDP-glucose and fructose- 6-phosphate. Involved in the regulation of carbon partitioning in the leaves of plants. May regulate the synthesis of sucrose and therefore play a major role as a limiting factor in the export of photoassimilates out of the leaf. Plays a role for sucrose availability that is essential for plant growth and fiber elongation. The polypeptide is Probable sucrose-phosphate synthase 1 (SPS1) (Craterostigma plantagineum (Blue gem)).